The primary structure comprises 231 residues: Eukaryotic translation initiation factor 4E-1 (231 aa).

EIF4G-binding stretches follow at residues 56–59 (HPLE) and 66–102 (FDNS…NNIH). MRNA is bound by residues 74-79 (RQTAWG), Lys-106, and 124-125 (WE). An intrachain disulfide couples Cys-129 to Cys-167. Positions 150-159 (YTLLAMIGHQ) are EIF4G-binding. MRNA contacts are provided by residues 174–179 (RAKGEK) and 219–223 (KRLDR).

This sequence belongs to the eukaryotic initiation factor 4E family. EIF4F is a multi-subunit complex, the composition of which varies with external and internal environmental conditions. It is composed of at least EIF4A, EIF4E and EIF4G. EIF4E is also known to interact with other partners. In higher plants two isoforms of EIF4F have been identified, named isoform EIF4F and isoform EIF(iso)4F. Isoform EIF4F has subunits p220 and p26, whereas isoform EIF(iso)4F has subunits p82 and p28. In terms of assembly, (Microbial infection) Interacts with potyvirus viral genome-linked protein (VPg); this interaction is possible in susceptible hosts but impaired in resistant plants. According to the redox status, the Cys-129-Cys-167 disulfide bridge may have a role in regulating protein function by affecting its ability to bind capped mRNA.

Its subcellular location is the nucleus. It is found in the cytoplasm. In terms of biological role, component of the protein complex eIF4F, which is involved in the recognition of the mRNA cap, ATP-dependent unwinding of 5'-terminal secondary structure and recruitment of mRNA to the ribosome. Recognizes and binds the 7-methylguanosine-containing mRNA cap during an early step in the initiation of protein synthesis and facilitates ribosome binding by inducing the unwinding of the mRNAs secondary structures. Key component of recessive resistance to potyviruses. Its function is as follows. (Microbial infection) Susceptibility host factor required for viral infection (e.g. pepper mottle virus (PepMoV), potato virus Y (PVY) and tobacco etch virus (TEV)) by recruiting viral RNAs to the host ribosomal complex via an interaction with viral genome-linked protein (VPg). The protein is Eukaryotic translation initiation factor 4E-1 of Solanum habrochaites (Wild tomato).